Consider the following 199-residue polypeptide: 5'-deoxynucleotidase YfbR (199 aa).

Residues arginine 18 to tryptophan 19 and histidine 33 contribute to the substrate site. The HD domain maps to valine 30–tyrosine 142. A divalent metal cation-binding residues include histidine 33, histidine 68, and aspartate 69. Substrate is bound by residues aspartate 69, aspartate 77–threonine 80, and aspartate 137. Position 137 (aspartate 137) interacts with a divalent metal cation.

It belongs to the 5DNU family. In terms of assembly, homodimer. It depends on a divalent metal cation as a cofactor.

The protein localises to the cytoplasm. It catalyses the reaction a 2'-deoxyribonucleoside 5'-phosphate + H2O = a 2'-deoxyribonucleoside + phosphate. Its function is as follows. Catalyzes the strictly specific dephosphorylation of 2'-deoxyribonucleoside 5'-monophosphates. This Shigella boydii serotype 18 (strain CDC 3083-94 / BS512) protein is 5'-deoxynucleotidase YfbR.